A 445-amino-acid chain; its full sequence is MKVKVLCRNPDDYVRETTRDIQRVPRNYDPTLHPFEVPREYTRALNATKLERVFAKPFVASLDGHRDVISCITKHAKSLSTVISGACDGEVKVWNLPKRECTRTVQAHEGFVRGICSRFCGTSFFTVGDDKTIKQWNMEAPGYGVREEPINTILGKAVFTGIDHHQREGTFVTCGQTVDIWDEQRSSPVLSFSWGVDSFSSVRYNPVEPDLLASCASDRSIVLYDTRESAPLRKVIMQLRSNTLCWNPMEAYYFTCANEDYNLYTYDIRNLDVPVTVHMDHVSAVLDVDYSPTGREFVSASFDKTIRIFPKDKGHSREVYHTKRMQHVICVKWSADSKFIMSGSDEMNIRLWKANASEKLGVLSTREKTAANYNKKLIQKFQHHPQVRRIARHRHLPRDVLKQKRELKEMKEARRRKEQNVRKHSKPGSVPLLTEKEKHVVKVVE.

WD repeat units follow at residues 64-104 (GHRD…CTRT), 107-146 (AHEG…YGVR), 154-191 (LGKA…PVLS), 194-234 (WGVD…PLRK), 236-276 (IMQL…VPVT), 280-319 (DHVS…SREV), and 323-362 (KRMQ…KLGV). Residues 353–441 (KANASEKLGV…LLTEKEKHVV (89 aa)) are required for nucleolar location. Residues 411-434 (KEARRRKEQNVRKHSKPGSVPLLT) are disordered. The segment covering 413-426 (ARRRKEQNVRKHSK) has biased composition (basic residues).

The protein belongs to the WD repeat DCAF13/WDSOF1 family. Part of the small subunit (SSU) processome, composed of more than 70 proteins and the RNA chaperone small nucleolar RNA (snoRNA) U3. Component of the DCX(DCAF13) E3 ubiquitin ligase complex, at least composed of CUL4 (CUL4A or CUL4B), DDB1, DCAF13 and RBX1.

Its subcellular location is the nucleus. It localises to the nucleolus. It participates in protein modification; protein ubiquitination. Part of the small subunit (SSU) processome, first precursor of the small eukaryotic ribosomal subunit. During the assembly of the SSU processome in the nucleolus, many ribosome biogenesis factors, an RNA chaperone and ribosomal proteins associate with the nascent pre-rRNA and work in concert to generate RNA folding, modifications, rearrangements and cleavage as well as targeted degradation of pre-ribosomal RNA by the RNA exosome. Functionally, substrate-recognition component of a DCX (DDB1-CUL4-X-box) E3 ubiquitin-protein ligase complex. The polypeptide is DDB1- and CUL4-associated factor 13 (dcaf13) (Danio rerio (Zebrafish)).